Here is a 337-residue protein sequence, read N- to C-terminus: Anthranilate phosphoribosyltransferase (337 aa).

Residues Gly-81, 84 to 85 (GD), Ser-89, 91 to 94 (NVST), 109 to 117 (KHGNRALSS), and Ala-121 each bind 5-phospho-alpha-D-ribose 1-diphosphate. Gly-81 contacts anthranilate. Residue Ser-93 participates in Mg(2+) binding. Residue Asn-112 participates in anthranilate binding. An anthranilate-binding site is contributed by Arg-167. Mg(2+) contacts are provided by Asp-226 and Glu-227.

It belongs to the anthranilate phosphoribosyltransferase family. Homodimer. The cofactor is Mg(2+).

The catalysed reaction is N-(5-phospho-beta-D-ribosyl)anthranilate + diphosphate = 5-phospho-alpha-D-ribose 1-diphosphate + anthranilate. It functions in the pathway amino-acid biosynthesis; L-tryptophan biosynthesis; L-tryptophan from chorismate: step 2/5. Catalyzes the transfer of the phosphoribosyl group of 5-phosphorylribose-1-pyrophosphate (PRPP) to anthranilate to yield N-(5'-phosphoribosyl)-anthranilate (PRA). In Bradyrhizobium sp. (strain BTAi1 / ATCC BAA-1182), this protein is Anthranilate phosphoribosyltransferase.